The sequence spans 211 residues: NADH-quinone oxidoreductase subunit I (211 aa).

Residues 1 to 27 are disordered; it reads MANTDRPALPHKRAVPPSRADSGPRRR. 2 consecutive 4Fe-4S ferredoxin-type domains span residues 71-101 and 117-146; these read LNRYPDGLEKCIGCELCAWACPADAIYVEGA and RVYQINYLRCIGCGLCIEACPTRALTMTYD. [4Fe-4S] cluster-binding residues include C81, C84, C87, C91, C126, C129, C132, and C136.

This sequence belongs to the complex I 23 kDa subunit family. NDH-1 is composed of 14 different subunits. Subunits NuoA, H, J, K, L, M, N constitute the membrane sector of the complex. [4Fe-4S] cluster is required as a cofactor.

The protein localises to the cell membrane. The enzyme catalyses a quinone + NADH + 5 H(+)(in) = a quinol + NAD(+) + 4 H(+)(out). In terms of biological role, NDH-1 shuttles electrons from NADH, via FMN and iron-sulfur (Fe-S) centers, to quinones in the respiratory chain. The immediate electron acceptor for the enzyme in this species is believed to be menaquinone. Couples the redox reaction to proton translocation (for every two electrons transferred, four hydrogen ions are translocated across the cytoplasmic membrane), and thus conserves the redox energy in a proton gradient. The polypeptide is NADH-quinone oxidoreductase subunit I (Mycobacterium bovis (strain ATCC BAA-935 / AF2122/97)).